We begin with the raw amino-acid sequence, 525 residues long: GMP synthase [glutamine-hydrolyzing] (525 aa).

In terms of domain architecture, Glutamine amidotransferase type-1 spans 9 to 207 (RILILDFGSQ…VRDICQCEAL (199 aa)). The active-site Nucleophile is the C86. Active-site residues include H181 and E183. Positions 208-400 (WTPAKIIDDA…LGLPYDMLYR (193 aa)) constitute a GMPS ATP-PPase domain. 235–241 (SGGVDSS) is a binding site for ATP.

Homodimer.

It catalyses the reaction XMP + L-glutamine + ATP + H2O = GMP + L-glutamate + AMP + diphosphate + 2 H(+). The protein operates within purine metabolism; GMP biosynthesis; GMP from XMP (L-Gln route): step 1/1. Functionally, catalyzes the synthesis of GMP from XMP. The chain is GMP synthase [glutamine-hydrolyzing] from Shigella flexneri serotype 5b (strain 8401).